The sequence spans 132 residues: Small ribosomal subunit protein uS11c (132 aa).

It belongs to the universal ribosomal protein uS11 family. In terms of assembly, part of the 30S ribosomal subunit.

The protein resides in the plastid. The protein localises to the chloroplast. This is Small ribosomal subunit protein uS11c from Cryptomeria japonica (Japanese cedar).